Reading from the N-terminus, the 906-residue chain is Protein translocase subunit SecA (906 aa).

ATP-binding positions include Q89, G107–T111, and D502. Residues E829 to Y898 form a disordered region. The span at W858–D877 shows a compositional bias: basic and acidic residues. Zn(2+) is bound by residues C890, C892, C901, and H902.

It belongs to the SecA family. As to quaternary structure, monomer and homodimer. Part of the essential Sec protein translocation apparatus which comprises SecA, SecYEG and auxiliary proteins SecDF-YajC and YidC. Zn(2+) is required as a cofactor.

Its subcellular location is the cell inner membrane. It is found in the cytoplasm. The catalysed reaction is ATP + H2O + cellular proteinSide 1 = ADP + phosphate + cellular proteinSide 2.. Part of the Sec protein translocase complex. Interacts with the SecYEG preprotein conducting channel. Has a central role in coupling the hydrolysis of ATP to the transfer of proteins into and across the cell membrane, serving both as a receptor for the preprotein-SecB complex and as an ATP-driven molecular motor driving the stepwise translocation of polypeptide chains across the membrane. The sequence is that of Protein translocase subunit SecA from Brucella anthropi (strain ATCC 49188 / DSM 6882 / CCUG 24695 / JCM 21032 / LMG 3331 / NBRC 15819 / NCTC 12168 / Alc 37) (Ochrobactrum anthropi).